The chain runs to 380 residues: Cytochrome b (380 aa).

The next 4 helical transmembrane spans lie at 33-53 (SGSLLGLCLITQILTGLFLAM), 77-98 (WLIRNIHANGASFFFICLYLHV), 113-133 (WNIGVVLLLLTMMTAFVGYVL), and 178-198 (FFAFHFLLPFVIAGASMIHLL). Positions 83 and 97 each coordinate heme b. Heme b contacts are provided by histidine 182 and histidine 196. Histidine 201 contributes to the a ubiquinone binding site. The next 4 membrane-spanning stretches (helical) occupy residues 226–246 (YKDLLGFILMLIGLTAIALFS), 288–308 (LGGVLALLFSILVLMLVPILH), 320–340 (LSQILFWTLVADMLVLTWIGG), and 347–367 (FVLIGQVASTIYFALFLIALP).

It belongs to the cytochrome b family. As to quaternary structure, the cytochrome bc1 complex contains 3 respiratory subunits (MT-CYB, CYC1 and UQCRFS1), 2 core proteins (UQCRC1 and UQCRC2) and probably 6 low-molecular weight proteins. It depends on heme b as a cofactor.

It localises to the mitochondrion inner membrane. Functionally, component of the ubiquinol-cytochrome c reductase complex (complex III or cytochrome b-c1 complex) that is part of the mitochondrial respiratory chain. The b-c1 complex mediates electron transfer from ubiquinol to cytochrome c. Contributes to the generation of a proton gradient across the mitochondrial membrane that is then used for ATP synthesis. The chain is Cytochrome b (mt-cyb) from Polyodon spathula (North American paddlefish).